Reading from the N-terminus, the 473-residue chain is Chromosomal replication initiator protein DnaA (473 aa).

The segment at 1–76 (MNYHSTNVNE…RTVLGRVIGP (76 aa)) is domain I, interacts with DnaA modulators. Residues 76 to 135 (PNASLQYNALVDNSSPKYPGTVTLAGCADGGQAAEQFDVNLLHRHMPNAATHSEAQDFDT) are domain II. Residues 136-353 (QLNSRLNFRN…GTLVSLITNS (218 aa)) are domain III, AAA+ region. ATP is bound by residues glycine 181, glycine 183, lysine 184, and threonine 185. Residues 354–473 (VVVGKEIDLT…VERAEQLIAN (120 aa)) are domain IV, binds dsDNA.

The protein belongs to the DnaA family. In terms of assembly, oligomerizes as a right-handed, spiral filament on DNA at oriC.

Its subcellular location is the cytoplasm. Functionally, plays an essential role in the initiation and regulation of chromosomal replication. ATP-DnaA binds to the origin of replication (oriC) to initiate formation of the DNA replication initiation complex once per cell cycle. Binds the DnaA box (a 9 base pair repeat at the origin) and separates the double-stranded (ds)DNA. Forms a right-handed helical filament on oriC DNA; dsDNA binds to the exterior of the filament while single-stranded (ss)DNA is stabiized in the filament's interior. The ATP-DnaA-oriC complex binds and stabilizes one strand of the AT-rich DNA unwinding element (DUE), permitting loading of DNA polymerase. After initiation quickly degrades to an ADP-DnaA complex that is not apt for DNA replication. Binds acidic phospholipids. In Porphyromonas gingivalis (strain ATCC 33277 / DSM 20709 / CIP 103683 / JCM 12257 / NCTC 11834 / 2561), this protein is Chromosomal replication initiator protein DnaA.